A 38-amino-acid chain; its full sequence is Alpha-amylase (38 aa).

Belongs to the glycosyl hydrolase 13 family. As to quaternary structure, monomer. The cofactor is Ca(2+). It depends on chloride as a cofactor. Expressed by the venom gland.

It localises to the secreted. It catalyses the reaction Endohydrolysis of (1-&gt;4)-alpha-D-glucosidic linkages in polysaccharides containing three or more (1-&gt;4)-alpha-linked D-glucose units.. The chain is Alpha-amylase from Tityus serrulatus (Brazilian scorpion).